Here is a 714-residue protein sequence, read N- to C-terminus: Fatty acid oxidation complex subunit alpha (714 aa).

An enoyl-CoA hydratase region spans residues Met-1 to Pro-190. Residues Ala-306–Gln-714 form a 3-hydroxyacyl-CoA dehydrogenase region.

In the N-terminal section; belongs to the enoyl-CoA hydratase/isomerase family. This sequence in the central section; belongs to the 3-hydroxyacyl-CoA dehydrogenase family. Heterotetramer of two alpha chains (FadJ) and two beta chains (FadI).

It localises to the cytoplasm. The enzyme catalyses a (3S)-3-hydroxyacyl-CoA = a (2E)-enoyl-CoA + H2O. It catalyses the reaction a 4-saturated-(3S)-3-hydroxyacyl-CoA = a (3E)-enoyl-CoA + H2O. The catalysed reaction is a (3S)-3-hydroxyacyl-CoA + NAD(+) = a 3-oxoacyl-CoA + NADH + H(+). It carries out the reaction (3S)-3-hydroxybutanoyl-CoA = (3R)-3-hydroxybutanoyl-CoA. The protein operates within lipid metabolism; fatty acid beta-oxidation. Catalyzes the formation of a hydroxyacyl-CoA by addition of water on enoyl-CoA. Also exhibits 3-hydroxyacyl-CoA epimerase and 3-hydroxyacyl-CoA dehydrogenase activities. In Escherichia coli O8 (strain IAI1), this protein is Fatty acid oxidation complex subunit alpha.